An 84-amino-acid chain; its full sequence is Large ribosomal subunit protein bL31B (84 aa).

It belongs to the bacterial ribosomal protein bL31 family. Type B subfamily. Part of the 50S ribosomal subunit.

The sequence is that of Large ribosomal subunit protein bL31B from Bacteroides thetaiotaomicron (strain ATCC 29148 / DSM 2079 / JCM 5827 / CCUG 10774 / NCTC 10582 / VPI-5482 / E50).